We begin with the raw amino-acid sequence, 123 residues long: Large ribosomal subunit protein bL21 (123 aa).

This sequence belongs to the bacterial ribosomal protein bL21 family. As to quaternary structure, part of the 50S ribosomal subunit. Contacts protein L20.

Functionally, this protein binds to 23S rRNA in the presence of protein L20. The polypeptide is Large ribosomal subunit protein bL21 (Rhizobium meliloti (strain 1021) (Ensifer meliloti)).